The primary structure comprises 463 residues: UDP-N-acetylmuramate--L-alanine ligase (463 aa).

Residue 112–118 (GTHGKTT) participates in ATP binding.

It belongs to the MurCDEF family.

It localises to the cytoplasm. It catalyses the reaction UDP-N-acetyl-alpha-D-muramate + L-alanine + ATP = UDP-N-acetyl-alpha-D-muramoyl-L-alanine + ADP + phosphate + H(+). Its pathway is cell wall biogenesis; peptidoglycan biosynthesis. Its function is as follows. Cell wall formation. In Thiobacillus denitrificans (strain ATCC 25259 / T1), this protein is UDP-N-acetylmuramate--L-alanine ligase.